Consider the following 492-residue polypeptide: MAHAARLLAALAALLAAAATGDARPSKIAVVGAGIGGSAVAHFLQQHFGPRVQIDVFEKGTVGGRLATISVNKQHYESGAASFHSLSLHMQGFVKQLGLRHRREVGGRSAIFNGENFVLEETDWYLLNLFRLWWHYGISFLRLQMWVEEVMEKFMRIYKYQAHGYAFSGVEELLYSLGESAFVNMTQRSVAESLLQVGVTQRFIDDVVSAVLRASYGQSAAMPAFAGAMSLAGAQGSLWSVEGGNKLVCSGLLKLTKANVIHATVTTVTLQPTEGKPLYRVRYENEAGTGSDNYDIVVIATPLHLDNSSTIAFEGFDPPIDVVQGSFQPTIVSLVHGYLNSSYFGFPDPKLFPFANILTTDFPTFFCALDNICPVNISASFRRKQPQEAAVWRVQSPQPLLRSQLKTLFRSYYSVQTAEWQAHPVHSPHTPLPRFTLHDQLFHLNALEWAASSVEVTAVAAKNVALLAFNRWYQDLDKIDQKDLMHKVKTEL.

Residues 1–21 (MAHAARLLAALAALLAAAATG) form the signal peptide. N-linked (GlcNAc...) asparagine glycosylation is present at Asn340.

This sequence belongs to the prenylcysteine oxidase family. FAD serves as cofactor.

It is found in the secreted. Functionally, likely to have oxidoreductase activity. Required in the mevalonate pathway to regulate prenylation and enhances the bactericidal activity of neutrophils. The sequence is that of Prenylcysteine oxidase 1-like (PCYOX1L) from Bos taurus (Bovine).